The primary structure comprises 112 residues: Protein FAM32A (112 aa).

The interval 23 to 56 is disordered; sequence TKRKKKKKDKDKAKMLEAMGTSKKSEEEKRRCLD. Basic and acidic residues predominate over residues 45–56; it reads KKSEEEKRRCLD.

This sequence belongs to the FAM32 family. In terms of tissue distribution, widely expressed, with highest level in pancreas and lowest in muscle.

It is found in the nucleus. Its function is as follows. May induce G2 arrest and apoptosis. May also increase cell sensitivity to apoptotic stimuli. In cell lines, may play a role in the inhibition of anchor-independent cell growth. This Mus musculus (Mouse) protein is Protein FAM32A (Fam32a).